A 330-amino-acid chain; its full sequence is Acrylyl-CoA reductase AcuI (330 aa).

Residues Tyr-44, 159–162 (AGGV), 181–183 (TGR), Arg-201, Leu-247, and Ser-272 contribute to the NADP(+) site.

The protein belongs to the zinc-containing alcohol dehydrogenase family. Acrylyl-CoA reductase subfamily. Homodimer.

It is found in the cytoplasm. The enzyme catalyses propanoyl-CoA + NADP(+) = acryloyl-CoA + NADPH + H(+). Probably catalyzes the NADPH-dependent reduction of acrylyl-CoA to propanoyl-CoA. Restores acrylate resistance when expressed in an E.coli strain K12 acuI deletion. This Ruegeria pomeroyi (strain ATCC 700808 / DSM 15171 / DSS-3) (Silicibacter pomeroyi) protein is Acrylyl-CoA reductase AcuI (acuI).